We begin with the raw amino-acid sequence, 151 residues long: Large ribosomal subunit protein bL9 (151 aa).

It belongs to the bacterial ribosomal protein bL9 family.

In terms of biological role, binds to the 23S rRNA. The sequence is that of Large ribosomal subunit protein bL9 from Chlorobium phaeobacteroides (strain DSM 266 / SMG 266 / 2430).